Consider the following 81-residue polypeptide: Elsinochrome C biosynthesis cluster protein SNOG_08613 (81 aa).

In terms of biological role, part of the gene cluster that mediates the biosynthesis of elsinochrome C, a perelyenequinone phytotoxin structurally similar to cercosporin. The first step of elsinochrome C biosynthesis is performed by the polyketide synthase elcA which catalyzes the formation of nor-toralactone. The starter unit acyltransferase (SAT) domain of elcA initiates polyketide extension by the selective utilization of acetyl-CoA, which is elongated to the heptaketide in the beta-ketoacyl synthase (KS) domain by successive condensations with six malonyl units introduced by the malonyl acyltransferase (MAT) domain. The product template (PT) domain catalyzes C4-C9 and C2-C11 aldol cyclizations and dehydrations to a trihydroxynaphthalene, which is thought to be delivered to the thioesterase (TE) domain for product release. The bifunctional enzyme elcB then methylates nor-toralactone to toralactone before conducting an unusual oxidative aromatic ring opening. The next step in perylenequinone biosynthesis is an O-methylation at the nascent OH-6 of the elcB product performed by the O-methyltransferase elcD. The oxidative coupling of the two monomeric naphthol units in perylenequinone biosynthesis is catalyzed by the FAD-dependent monooxygenase elcE and the multicopper oxidase elcG. ElcG might catalyze the first intermolecular coupling in a regio- and stereo-selective manner via a phenol radical coupling mechanism and the elcE could forge the second C-C bond intramolecularly via a hydride transfer mechanism. The fasciclin domain-containing protein elcF might also play a role duting this step. The last piece of the puzzle in the biosynthesis of elsinochrome C is the additional annulation by enolate coupling to afford the dihydrobenzo(ghi)perylenequinone system, catalyzed by the FAD-dependent monooxygenase elcH. The protein is Elsinochrome C biosynthesis cluster protein SNOG_08613 of Phaeosphaeria nodorum (strain SN15 / ATCC MYA-4574 / FGSC 10173) (Glume blotch fungus).